Here is a 338-residue protein sequence, read N- to C-terminus: Flap endonuclease 1 (338 aa).

Residues 1–98 (MGTDIGDLLL…DTLAKRHEVR (98 aa)) are N-domain. The Mg(2+) site is built by Asp27, Asp80, Glu152, Glu154, Asp173, Asp175, and Asp236. The tract at residues 116-257 (EAYKYAQASS…RALKLVKEHG (142 aa)) is I-domain. The segment at 330–338 (SQSTLDQWF) is interaction with PCNA.

The protein belongs to the XPG/RAD2 endonuclease family. FEN1 subfamily. In terms of assembly, interacts with PCNA. PCNA stimulates the nuclease activity without altering cleavage specificity. Requires Mg(2+) as cofactor.

Structure-specific nuclease with 5'-flap endonuclease and 5'-3' exonuclease activities involved in DNA replication and repair. During DNA replication, cleaves the 5'-overhanging flap structure that is generated by displacement synthesis when DNA polymerase encounters the 5'-end of a downstream Okazaki fragment. Binds the unpaired 3'-DNA end and kinks the DNA to facilitate 5' cleavage specificity. Cleaves one nucleotide into the double-stranded DNA from the junction in flap DNA, leaving a nick for ligation. Also involved in the base excision repair (BER) pathway. Acts as a genome stabilization factor that prevents flaps from equilibrating into structures that lead to duplications and deletions. Also possesses 5'-3' exonuclease activity on nicked or gapped double-stranded DNA. In Methanococcoides burtonii (strain DSM 6242 / NBRC 107633 / OCM 468 / ACE-M), this protein is Flap endonuclease 1.